The chain runs to 192 residues: Large ribosomal subunit protein bL9 (192 aa).

The tract at residues 172-192 (DALRPEDFFDPEADGVDEDEA) is disordered. Residues 179 to 192 (FFDPEADGVDEDEA) show a composition bias toward acidic residues.

The protein belongs to the bacterial ribosomal protein bL9 family.

Its function is as follows. Binds to the 23S rRNA. This Rhizobium leguminosarum bv. trifolii (strain WSM2304) protein is Large ribosomal subunit protein bL9.